We begin with the raw amino-acid sequence, 546 residues long: MILPADPIFSQLLLIARNSPDEVVIDDRNLHVQAGYSHLLHDAVQLAQQLRDSLSQGPSTVGSAFIGILAPTSYESTVASLAILAVGAAGASLEELAYTLKQCSATCVLVGSQHQQTKLATQLQEQTGILKLAIPVLSPGRPPIESYTLDEDSIPSDDLPAFLFFTSGTTGAPKGVLHARRYLYAKFSVQQSELTDELCLIYDSICWSTCFISVLLHILRGERVELHELDARYDLIWDRFRDCEITKIHFSPTSWYTMMKVFQERISKLPEPSVQAYIRGAQYIRTPITLGGILPVPVKQFWLNLRGGRPIKVIYGSTEAGLLTVADPEASASEEASIGSPAPNVTVKLSDGDSGELLVKAPTLLLQYLNSPELTASCFDSEGFYKTGDLVERQGKNFIFRGRYKADFFKFWDHKIPRLHVESCLSSLPYIEEAHILPVADARCDNRVAALVRLRQDHTCVTLQSIRKDLSTMLPVYQMPTLLRILGKGDEVPRTFSEKVAMKKTVERFFPRWNNDHFMDDSIEVLGIKEILQFDTTGPLELVELW.

Residues 166–174 (TSGTTGAPK), 300–305 (QFWLNL), and Arg403 each bind ATP. Residues 412-414 (WDH) and 482-484 (LLR) contribute to the CoA site. An ATP-binding site is contributed by Lys499.

The protein belongs to the ATP-dependent AMP-binding enzyme family.

Its pathway is secondary metabolite biosynthesis. Acyl-CoA ligase; part of the gene cluster that mediates the biosynthesis of oryzines, natural products with an unusual maleidride backbone. The two subunits of the fungal fatty acid synthase oryfasA and oryfasB probably form octenoic acid. This fatty acid is most likely activated by the acyl-CoA ligase oryP to give octenyl-CoA before the citrate synthase-like protein oryE catalyzes condensation with oxaloacetate to form tricarboxylic acid. The next steps of the pathways are conjectural, but a favorite possible route has been proposed, beginning with decarboxylation and concomitant dehydration by the decarboxylase oryM, followed by tautomerization, which may lead to the production of a diene intermediate. Reduction of this diene intermediate could give the known metabolite piliformic acid. On the pathway to oryzine B and oryzine A, however, hydroxylation of the diene by the alpha-ketoglutarate-dependent dioxygenase oryG and lactonisation by the lactonohydrolases oryH or oryL could give oryzine B directly. Finally, enoyl reduction by the dehydrogenase oryD would then convert oryzine B into oryzine A. This Aspergillus oryzae (strain ATCC 42149 / RIB 40) (Yellow koji mold) protein is Acyl-CoA ligase oryP.